A 305-amino-acid polypeptide reads, in one-letter code: Phosphoribosylaminoimidazole-succinocarboxamide synthase (305 aa).

It belongs to the SAICAR synthetase family.

It carries out the reaction 5-amino-1-(5-phospho-D-ribosyl)imidazole-4-carboxylate + L-aspartate + ATP = (2S)-2-[5-amino-1-(5-phospho-beta-D-ribosyl)imidazole-4-carboxamido]succinate + ADP + phosphate + 2 H(+). It functions in the pathway purine metabolism; IMP biosynthesis via de novo pathway; 5-amino-1-(5-phospho-D-ribosyl)imidazole-4-carboxamide from 5-amino-1-(5-phospho-D-ribosyl)imidazole-4-carboxylate: step 1/2. The chain is Phosphoribosylaminoimidazole-succinocarboxamide synthase from Albidiferax ferrireducens (strain ATCC BAA-621 / DSM 15236 / T118) (Rhodoferax ferrireducens).